The following is a 321-amino-acid chain: Putative sulfotransferase vep-2 (321 aa).

A helical membrane pass occupies residues 11–31; that stretch reads IARVLIIIASISVICITLFIS.

It to C.elegans C41C4.1 and C18B2.2.

The protein localises to the membrane. This chain is Putative sulfotransferase vep-2, found in Caenorhabditis elegans.